Here is a 295-residue protein sequence, read N- to C-terminus: UDP-N-acetylenolpyruvoylglucosamine reductase (295 aa).

An FAD-binding PCMH-type domain is found at 27–194 (GVGGEAEVWF…TRVRLKLRRS (168 aa)). The active site involves arginine 174. Cysteine 221 (proton donor) is an active-site residue. Residue glutamate 287 is part of the active site.

It belongs to the MurB family. It depends on FAD as a cofactor.

The protein localises to the cytoplasm. It carries out the reaction UDP-N-acetyl-alpha-D-muramate + NADP(+) = UDP-N-acetyl-3-O-(1-carboxyvinyl)-alpha-D-glucosamine + NADPH + H(+). It participates in cell wall biogenesis; peptidoglycan biosynthesis. In terms of biological role, cell wall formation. This chain is UDP-N-acetylenolpyruvoylglucosamine reductase, found in Deinococcus geothermalis (strain DSM 11300 / CIP 105573 / AG-3a).